A 381-amino-acid chain; its full sequence is Heterogeneous nuclear rnp K-like protein 2 (381 aa).

The interval 1–34 (MSQFFEAATPVAIPTNNTNGGSSDAGSAATGGAP) is disordered. Over residues 15 to 33 (TNNTNGGSSDAGSAATGGA) the composition is skewed to low complexity. KH domains follow at residues 43–107 (TINH…IGDI), 156–221 (IGYV…LIEI), and 258–326 (NTRI…ESML). The disordered stretch occupies residues 357-381 (RSDSASFLEEKEEPQKNHDNKEEQS). Phosphoserine is present on residues serine 358, serine 360, and serine 362. Positions 369 to 381 (EPQKNHDNKEEQS) are enriched in basic and acidic residues.

It belongs to the HEK2 family. Binds RNA. In terms of processing, phosphorylated by the plasma membrane-Anchored casein kinase YCK1. Phosphorylation at its C-terminus reduces its RNA-binding capacity.

Its subcellular location is the cytoplasm. It localises to the P-body. It is found in the nucleus. The protein localises to the chromosome. The protein resides in the telomere. Its function is as follows. RNA-binding protein involved in the correct localization of transcripts in the cell. RNA localization is a widespread mechanism for achieving localized protein synthesis. Required for the asymmetric localization to the daughter cell nucleus of the ASH1 transcript, coding for a specific repressor of transcription. Overexpression inhibits translation of the ASH1 transcript. Involved in the stability of transcripts, like the MTL1 mRNA. Involved in structural and functional organization of telomeric chromatin and regulates silencing at the HMR locus. This is Heterogeneous nuclear rnp K-like protein 2 (HEK2) from Saccharomyces cerevisiae (strain RM11-1a) (Baker's yeast).